The primary structure comprises 1219 residues: Regulator of telomere elongation helicase 1 (1219 aa).

Residues 7–296 enclose the Helicase ATP-binding domain; it reads NGVTVDFPFQ…TKAAQQGEPH (290 aa). 42-49 serves as a coordination point for ATP; that stretch reads SPTGTGKT. The [4Fe-4S] cluster site is built by C145, C163, C172, and C207. Positions 151–167 match the Nuclear localization signal motif; the sequence is KKQESNHLQIHLCRKKV. The short motif at 250–253 is the DEAH box element; that stretch reads DEAH. 7 disordered regions span residues 287-306, 757-786, 839-877, 979-1005, 1017-1054, 1132-1151, and 1159-1219; these read TKAAQQGEPHPEFSADSPSP, PAPAPRATAPSVRGEDAVSEAKSPGPFFST, EHSEQRAGSPGEEQAHSCSTLSLLSEKRPAEEPRGGRKK, RPEHSIPRRQRAQPVLDPTGRTAPDPK, DPQEHLNQGRPHLSPRPPPTGDPGSQPQWGSGVPRAGK, CTDLTGRPYPGMEPPGPQEE, and LTHR…EWGL. The span at 757-766 shows a compositional bias: low complexity; the sequence is PAPAPRATAP. Over residues 863 to 873 the composition is skewed to basic and acidic residues; it reads SEKRPAEEPRG. Residues 871–877 carry the Nuclear localization signal motif; sequence PRGGRKK. Residues 1176-1185 are compositionally biased toward polar residues; sequence KTQSKISSFL. The PIP-box signature appears at 1178–1185; it reads QSKISSFL. The segment covering 1200–1219 has biased composition (low complexity); it reads AGPSQSSGPPHGPAASEWGL.

This sequence belongs to the helicase family. RAD3/XPD subfamily. In terms of assembly, interacts with TERF1. Interacts (via PIP-box) with PCNA; the interaction is direct and essential for suppressing telomere fragility. Interacts with MMS19; the interaction mediates the association of RTEL1 with the cytosolic iron-sulfur protein assembly (CIA) complex.

Its subcellular location is the nucleus. The catalysed reaction is ATP + H2O = ADP + phosphate + H(+). In terms of biological role, a probable ATP-dependent DNA helicase implicated in telomere-length regulation, DNA repair and the maintenance of genomic stability. Acts as an anti-recombinase to counteract toxic recombination and limit crossover during meiosis. Regulates meiotic recombination and crossover homeostasis by physically dissociating strand invasion events and thereby promotes noncrossover repair by meiotic synthesis dependent strand annealing (SDSA) as well as disassembly of D loop recombination intermediates. Also disassembles T loops and prevents telomere fragility by counteracting telomeric G4-DNA structures, which together ensure the dynamics and stability of the telomere. The protein is Regulator of telomere elongation helicase 1 of Homo sapiens (Human).